The primary structure comprises 445 residues: Phosphoglucosamine mutase (445 aa).

The Phosphoserine intermediate role is filled by S102. Mg(2+) contacts are provided by S102, D241, D243, and D245. At S102 the chain carries Phosphoserine.

The protein belongs to the phosphohexose mutase family. The cofactor is Mg(2+). Activated by phosphorylation.

It carries out the reaction alpha-D-glucosamine 1-phosphate = D-glucosamine 6-phosphate. Functionally, catalyzes the conversion of glucosamine-6-phosphate to glucosamine-1-phosphate. In Edwardsiella ictaluri (strain 93-146), this protein is Phosphoglucosamine mutase.